Here is a 158-residue protein sequence, read N- to C-terminus: MNYVQYYPTDIVNGEGTRCTLFVSGCTHACRGCYNKKSWSFCAGLPFDEKMEAQILQDLKDTRIKRQGLTLTGGDPLHPRNLAVLLPFVKRVKHECPDKDLWVWTGYTLAELKADTLQRQILPYIDVLIDGKFEQDKADPSLVWRGSANQIIYRFTQY.

Residues cysteine 26, cysteine 30, and cysteine 33 each contribute to the [4Fe-4S] cluster site. Residues 32–34 and glycine 74 each bind S-adenosyl-L-methionine; that span reads GCY.

The protein belongs to the organic radical-activating enzymes family. In terms of assembly, forms a tetramer composed of two NrdD and two NrdG subunits. The cofactor is [4Fe-4S] cluster.

The protein localises to the cytoplasm. The enzyme catalyses glycyl-[protein] + reduced [flavodoxin] + S-adenosyl-L-methionine = glycin-2-yl radical-[protein] + semiquinone [flavodoxin] + 5'-deoxyadenosine + L-methionine + H(+). Its function is as follows. Activation of anaerobic ribonucleoside-triphosphate reductase under anaerobic conditions by generation of an organic free radical, using S-adenosylmethionine and reduced flavodoxin as cosubstrates to produce 5'-deoxy-adenosine. The polypeptide is Anaerobic ribonucleoside-triphosphate reductase-activating protein (nrdG) (Pasteurella multocida (strain Pm70)).